Here is a 127-residue protein sequence, read N- to C-terminus: RutC family protein PYRAB12510 (127 aa).

It belongs to the RutC family.

This chain is RutC family protein PYRAB12510, found in Pyrococcus abyssi (strain GE5 / Orsay).